Here is a 286-residue protein sequence, read N- to C-terminus: F-box/SPRY domain-containing protein 1 (286 aa).

The residue at position 2 (Ala-2) is an N-acetylalanine. In terms of domain architecture, F-box spans Ala-33–Leu-82. One can recognise a B30.2/SPRY domain in the interval Leu-92–Leu-284.

The protein belongs to the FBXO45/Fsn family. In terms of assembly, forms a complex with MYCBP2 and SKP1. Interacts with HEY1; leading to FBXO45 nuclear translocation. Interacts (via SPRY domain) with CDH2.

The protein resides in the secreted. It localises to the postsynaptic cell membrane. It is found in the presynaptic cell membrane. Its subcellular location is the nucleus. The protein operates within protein modification; protein ubiquitination. In terms of biological role, component of E3 ubiquitin ligase complex consisting of FBXO45, MYCBP2 and SKP1. Functions in substrate recognition but also plays an important role in assembly of the complex. Required for normal neuromuscular synaptogenesis, axon pathfinding and neuronal migration. Regulates neuron migration during brain development through interaction with N-cadherin/CDH2 after secretion via a non-classical mechanism. Plays a role in the regulation of neurotransmission at mature neurons. May control synaptic activity by controlling UNC13A via ubiquitin dependent pathway. Specifically recognizes TP73, promoting its ubiquitination and degradation. Polyubiquitinates NMNAT2, an adenylyltransferase that acts as an axon maintenance factor, and regulates its stability and degradation by the proteasome. Also acts by ubiquitinating FBXW7 during prolonged mitotic arrest and promotes FBXW7 proteasomal degradation. Induces subsequently an increase in mitotic slippage and prevents mitotic cell death. In response to influenza infection, mediates interferon-lambda receptor IFNLR1 polyubiquitination and degradation through the ubiquitin-proteasome system by docking with its intracellular receptor domain. The protein is F-box/SPRY domain-containing protein 1 (FBXO45) of Homo sapiens (Human).